The chain runs to 146 residues: Protein disulfide-isomerase 5-1 (146 aa).

The N-terminal stretch at 1–25 (MTLGARLVAPMIILLLFIPIELVKA) is a signal peptide. Positions 26-133 (EVITLTPETF…LKAFVVEETE (108 aa)) constitute a Thioredoxin domain. Catalysis depends on nucleophile residues C55 and C58. An intrachain disulfide couples C55 to C58.

This sequence belongs to the protein disulfide isomerase family.

Acts as a protein-folding catalyst that interacts with nascent polypeptides to catalyze the formation, isomerization, and reduction or oxidation of disulfide bonds. This Arabidopsis thaliana (Mouse-ear cress) protein is Protein disulfide-isomerase 5-1 (PDIL5-1).